The sequence spans 1362 residues: ATP-dependent RNA helicase dhx29 (1362 aa).

Basic residues predominate over residues 1 to 10 (MGGKNKKNRH). Residues 1–76 (MGGKNKKNRH…FASSSDSGVS (76 aa)) form a disordered region. Residues 18–27 (GATAAANRPR) are compositionally biased toward low complexity. Positions 28 to 41 (AAAEPRPGGEDAAK) are enriched in basic and acidic residues. A compositionally biased stretch (low complexity) spans 66-76 (SFASSSDSGVS). The stretch at 89–109 (EAKLEKRIISLINEHKKLNSN) forms a coiled coil. Disordered regions lie at residues 182–215 (QRAR…LKGN) and 229–257 (EQGS…DPNE). The span at 231 to 242 (GSDDDDDDDDVK) shows a compositional bias: acidic residues. Over residues 243–257 (EEEKETTLEKFDPNE) the composition is skewed to basic and acidic residues. Residues 285-305 (QKEAQERIRGYQQEMKSLEDH) adopt a coiled-coil conformation. A disordered region spans residues 317–336 (VKSESKQPKPALPPSEDEPL). A Helicase ATP-binding domain is found at 576 to 749 (LETLKRHRVI…FTHCPIIRIS (174 aa)). Residue 589–596 (GETGSGKS) participates in ATP binding. The DEAH box signature appears at 696–699 (DEVH). The Helicase C-terminal domain maps to 852-1021 (DISPEYRNVE…ELCLHIMKCD (170 aa)).

It belongs to the DEAD box helicase family. DEAH subfamily. Part of the 43S pre-initiation complex (PIC).

It localises to the cytoplasm. It carries out the reaction ATP + H2O = ADP + phosphate + H(+). Its function is as follows. ATP-binding RNA helicase involved in translation initiation. Part of the 43S pre-initiation complex that is required for efficient initiation on mRNAs of higher eukaryotes with structured 5'-UTRs by promoting efficient NTPase-dependent 48S complex formation. Specifically binds to the 40S ribosome near the mRNA entrance. Does not possess a processive helicase activity. The sequence is that of ATP-dependent RNA helicase dhx29 from Xenopus laevis (African clawed frog).